The sequence spans 177 residues: Large ribosomal subunit protein uL6 (177 aa).

It belongs to the universal ribosomal protein uL6 family. Part of the 50S ribosomal subunit.

In terms of biological role, this protein binds to the 23S rRNA, and is important in its secondary structure. It is located near the subunit interface in the base of the L7/L12 stalk, and near the tRNA binding site of the peptidyltransferase center. The protein is Large ribosomal subunit protein uL6 of Micrococcus luteus (strain ATCC 4698 / DSM 20030 / JCM 1464 / CCM 169 / CCUG 5858 / IAM 1056 / NBRC 3333 / NCIMB 9278 / NCTC 2665 / VKM Ac-2230) (Micrococcus lysodeikticus).